We begin with the raw amino-acid sequence, 226 residues long: ATP-dependent dethiobiotin synthetase BioD (226 aa).

Residue Asp13–Leu18 participates in ATP binding. Residue Thr17 participates in Mg(2+) binding. Residue Lys38 is part of the active site. ATP contacts are provided by residues Asp55, Glu117–Gly120, Asn177–Arg178, Pro206–Val208, and Glu213. Asp55 and Glu117 together coordinate Mg(2+).

Belongs to the dethiobiotin synthetase family. Homodimer. The cofactor is Mg(2+).

It is found in the cytoplasm. It catalyses the reaction (7R,8S)-7,8-diammoniononanoate + CO2 + ATP = (4R,5S)-dethiobiotin + ADP + phosphate + 3 H(+). The protein operates within cofactor biosynthesis; biotin biosynthesis; biotin from 7,8-diaminononanoate: step 1/2. Functionally, catalyzes a mechanistically unusual reaction, the ATP-dependent insertion of CO2 between the N7 and N8 nitrogen atoms of 7,8-diaminopelargonic acid (DAPA, also called 7,8-diammoniononanoate) to form a ureido ring. This is ATP-dependent dethiobiotin synthetase BioD from Aeromonas hydrophila subsp. hydrophila (strain ATCC 7966 / DSM 30187 / BCRC 13018 / CCUG 14551 / JCM 1027 / KCTC 2358 / NCIMB 9240 / NCTC 8049).